Reading from the N-terminus, the 266-residue chain is Putative pyruvate, phosphate dikinase regulatory protein (266 aa).

149–156 lines the ADP pocket; sequence GVSRTSKT.

Belongs to the pyruvate, phosphate/water dikinase regulatory protein family. PDRP subfamily.

The catalysed reaction is N(tele)-phospho-L-histidyl/L-threonyl-[pyruvate, phosphate dikinase] + ADP = N(tele)-phospho-L-histidyl/O-phospho-L-threonyl-[pyruvate, phosphate dikinase] + AMP + H(+). It catalyses the reaction N(tele)-phospho-L-histidyl/O-phospho-L-threonyl-[pyruvate, phosphate dikinase] + phosphate + H(+) = N(tele)-phospho-L-histidyl/L-threonyl-[pyruvate, phosphate dikinase] + diphosphate. Its function is as follows. Bifunctional serine/threonine kinase and phosphorylase involved in the regulation of the pyruvate, phosphate dikinase (PPDK) by catalyzing its phosphorylation/dephosphorylation. The protein is Putative pyruvate, phosphate dikinase regulatory protein of Geobacillus thermodenitrificans (strain NG80-2).